A 398-amino-acid polypeptide reads, in one-letter code: Glycerol-3-phosphate dehydrogenase [NAD(+)] 1 (398 aa).

NAD(+) contacts are provided by residues 50–55 (GSGNWG), Phe138, Lys161, and Ala194. Lys161 is a substrate binding site. Lys253 acts as the Proton acceptor in catalysis. The NAD(+) site is built by Arg318 and Gln350. Substrate is bound at residue 318–319 (RN).

Belongs to the NAD-dependent glycerol-3-phosphate dehydrogenase family.

Its subcellular location is the cytoplasm. It catalyses the reaction sn-glycerol 3-phosphate + NAD(+) = dihydroxyacetone phosphate + NADH + H(+). The polypeptide is Glycerol-3-phosphate dehydrogenase [NAD(+)] 1 (GPD1) (Yarrowia lipolytica (strain CLIB 122 / E 150) (Yeast)).